A 655-amino-acid polypeptide reads, in one-letter code: p-hydroxybenzoic acid efflux pump subunit AaeB (655 aa).

The next 11 membrane-spanning stretches (helical) occupy residues 13–33, 38–58, 69–89, 93–113, 121–141, 152–172, 370–390, 407–427, 431–451, 459–479, and 482–502; these read FAVK…HFQL, WAVL…GGEP, LRII…ISMI, LLMI…SSLV, WGLS…EPLL, EIVI…PRSI, LFWL…IAVV, FIYG…VIIP, QSML…GIEV, MGAL…TFHF, and FLDS…VILL.

It belongs to the aromatic acid exporter ArAE (TC 2.A.85) family.

The protein resides in the cell inner membrane. Forms an efflux pump with AaeA. Could function as a metabolic relief valve, allowing to eliminate certain compounds when they accumulate to high levels in the cell. In Salmonella enteritidis PT4 (strain P125109), this protein is p-hydroxybenzoic acid efflux pump subunit AaeB.